The primary structure comprises 82 residues: MKSSTTSMQLIPTLFFLTILLASPEMVEGQQMCEAKSLDWKGMCLKWRNCRQVCISEGFTDGRCKGFTRKCICSKPCFVLPN.

An N-terminal signal peptide occupies residues 1–29 (MKSSTTSMQLIPTLFFLTILLASPEMVEG). A Pyrrolidone carboxylic acid modification is found at Gln-30. Intrachain disulfides connect Cys-33-Cys-77, Cys-44-Cys-64, Cys-50-Cys-71, and Cys-54-Cys-73.

Belongs to the DEFL family. Expressed in stems, roots, rosette leaves and flower buds.

The protein resides in the secreted. In Arabidopsis thaliana (Mouse-ear cress), this protein is Defensin-like protein 7 (LCR75).